Reading from the N-terminus, the 170-residue chain is Peptide deformylase (170 aa).

Residues Cys94 and His136 each coordinate Fe cation. The active site involves Glu137. His140 is a binding site for Fe cation.

The protein belongs to the polypeptide deformylase family. The cofactor is Fe(2+).

The enzyme catalyses N-terminal N-formyl-L-methionyl-[peptide] + H2O = N-terminal L-methionyl-[peptide] + formate. Its function is as follows. Removes the formyl group from the N-terminal Met of newly synthesized proteins. Requires at least a dipeptide for an efficient rate of reaction. N-terminal L-methionine is a prerequisite for activity but the enzyme has broad specificity at other positions. This is Peptide deformylase from Xylella fastidiosa (strain 9a5c).